A 612-amino-acid chain; its full sequence is Vitamin B12 transporter BtuB (612 aa).

A signal peptide spans 1–20; that stretch reads MIKKSLLCTALSVTAFSGWA. Residues 26 to 33 carry the TonB box motif; the sequence is DTLVVTAN. The region spanning 38 to 152 is the TBDR plug domain; sequence PRSAVLAPIT…IGGVVNIITT (115 aa). Cyanocob(III)alamin contacts are provided by residues S85, N92, and 110 to 111; that span reads VS. The TBDR beta-barrel domain occupies 155-612; that stretch reads KPGTELTAGV…EYTLSGSYTF (458 aa). Beta stranded transmembrane passes span 158–165, 169–178, and 184–195; these read TELTAGVG, YQNYDVSTQQ, and TRVTLMGDYAYT. Ca(2+) contacts are provided by D199, Q211, D213, and D215. 2 beta stranded membrane-spanning segments follow: residues 217 to 227 and 232 to 248; these read FLSKTLYGALE and DTWS…NRTN. Ca(2+) contacts are provided by Y249, D250, and D261. 14 beta stranded membrane-spanning segments follow: residues 263–277, 279–296, 309–325, 328–337, 353–369, 371–381, 385–400, 403–417, 434–443, 449–458, 473–490, 494–509, 517–529, and 535–550; these read RKLY…LRFN, ELIQ…KDYN, TLDE…NSIV, HGNVGAGVDW, YDQR…QQLG, FTFEGAARSDD, FGRH…WEFI, YRFI…KAPN, QSKQWEGAFE, VNWRVSGYRN, YFNE…TANF, PLAH…SRNA, RRSK…QLDW, and DWGL…YDTD. T309 lines the cyanocob(III)alamin pocket. R517 lines the cyanocob(III)alamin pocket. Y551 serves as a coordination point for cyanocob(III)alamin. Beta stranded transmembrane passes span 556 to 570, 583 to 594, and 600 to 612; these read PVKM…LAVS, IANRFDKDYETV, and AGRE…SYTF. The TonB C-terminal box motif lies at 595–612; it reads YGYATAGREYTLSGSYTF.

This sequence belongs to the TonB-dependent receptor family. BtuB (TC 1.B.14.3.1) subfamily.

It localises to the cell outer membrane. Functionally, involved in the active translocation of vitamin B12 (cyanocobalamin) across the outer membrane to the periplasmic space. It derives its energy for transport by interacting with the trans-periplasmic membrane protein TonB. The protein is Vitamin B12 transporter BtuB of Citrobacter freundii.